We begin with the raw amino-acid sequence, 116 residues long: Large ribosomal subunit protein bL17 (116 aa).

The protein belongs to the bacterial ribosomal protein bL17 family. In terms of assembly, part of the 50S ribosomal subunit. Contacts protein L32.

This Cyanothece sp. (strain PCC 7425 / ATCC 29141) protein is Large ribosomal subunit protein bL17.